A 65-amino-acid polypeptide reads, in one-letter code: Myotoxin-1 (65 aa).

The first 22 residues, 1 to 22 (MKILYLLFAFLFLAFLSEPGNA), serve as a signal peptide directing secretion. 3 cysteine pairs are disulfide-bonded: Cys26–Cys58, Cys33–Cys52, and Cys40–Cys59.

Belongs to the crotamine-myotoxin family. Monomer. As to expression, expressed by the venom gland.

It localises to the secreted. Functionally, cationic peptide that possesses multiple functions. It acts as a cell-penetrating peptide (CPP), and as a potent voltage-gated potassium channel (Kv) inhibitor. It exhibits antimicrobial activities, hind limb paralysis, and severe muscle necrosis by a non-enzymatic mechanism. The polypeptide is Myotoxin-1 (Crotalus durissus terrificus (South American rattlesnake)).